A 688-amino-acid polypeptide reads, in one-letter code: DNA-directed RNA polymerase subunit beta' (688 aa).

Zn(2+) is bound by residues C69, C71, C87, and C90. Residues D497, D499, and D501 each contribute to the Mg(2+) site.

The protein belongs to the RNA polymerase beta' chain family. RpoC1 subfamily. In plastids the minimal PEP RNA polymerase catalytic core is composed of four subunits: alpha, beta, beta', and beta''. When a (nuclear-encoded) sigma factor is associated with the core the holoenzyme is formed, which can initiate transcription. Requires Mg(2+) as cofactor. Zn(2+) is required as a cofactor.

It is found in the plastid. The protein localises to the chloroplast. The enzyme catalyses RNA(n) + a ribonucleoside 5'-triphosphate = RNA(n+1) + diphosphate. DNA-dependent RNA polymerase catalyzes the transcription of DNA into RNA using the four ribonucleoside triphosphates as substrates. The chain is DNA-directed RNA polymerase subunit beta' from Sinapis alba (White mustard).